The chain runs to 457 residues: MDSTTTPPSLRSNTRSALRLARNNKTLVKSHIPSLDLVLLSPKNNNGTPYPSPVSLSSPSSPVTLREILLLSPSPLRKSRTRLSNRFDMEAAEAAVTARRSKTKGGQNGLLASPSPRNFRRSRLRSEAMVDTKENTEPIVVVTDEKKQNQRKQKKLGRSKKEKHSSVPLLASPSPSSDQPQDVCQGDLERIRENISDLIMWRDVAKSTLWFGFGCICFLSTCFAAKGFNFSVFSAISYLGLLFLGVSFLSNTLRQRVTEEARRELKLSEDDVLRIARRMLPITNLAISKTSELFSGEPAMTLKVAPFVLMGAEYGYLITLWRLCAFGFFLSFTIPKLYSCYASQLNQKVECAQRRFVEAWGVCTHKKFVAGSAVTAFWNLTSLKTRFIAVFIIVVVIRYRRQNLQLDSEDEEEKKQQEKTHPEQQKSPEDKSTSPRSAEEEQALVLVAETKAPKKLY.

A disordered region spans residues 94–183; that stretch reads AAVTARRSKT…SPSSDQPQDV (90 aa). The span at 124–136 shows a compositional bias: basic and acidic residues; sequence LRSEAMVDTKENT. Over residues 149 to 163 the composition is skewed to basic residues; it reads NQRKQKKLGRSKKEK. Over residues 166–183 the composition is skewed to low complexity; that stretch reads SVPLLASPSPSSDQPQDV. The Reticulon domain occupies 195–385; the sequence is ISDLIMWRDV…AFWNLTSLKT (191 aa). Transmembrane regions (helical) follow at residues 208–228, 230–250, 314–334, and 377–397; these read TLWF…AKGF, FSVF…SFLS, YGYL…SFTI, and FWNL…VVVI. A disordered region spans residues 407–457; it reads DSEDEEEKKQQEKTHPEQQKSPEDKSTSPRSAEEEQALVLVAETKAPKKLY. Residues 413–439 show a composition bias toward basic and acidic residues; that stretch reads EKKQQEKTHPEQQKSPEDKSTSPRSAE.

The protein resides in the endoplasmic reticulum membrane. The chain is Reticulon-like protein B18 (RTNLB18) from Arabidopsis thaliana (Mouse-ear cress).